The following is a 283-amino-acid chain: Tetraspanin-33 (283 aa).

Topologically, residues 1-24 (MARRPGVPAAYGDEFSFVSPLVKY) are cytoplasmic. Residues 25–45 (LLFFFNMLFWVISMVMVAVGV) traverse the membrane as a helical segment. Residues 46-64 (YARLMKHAEAALACLAVDP) are Extracellular-facing. Residues 65–85 (AILLIVVGVLMFLLTFCGCIG) traverse the membrane as a helical segment. The Cytoplasmic segment spans residues 86-96 (SLRENICLLQT). The helical transmembrane segment at 97-117 (FSLCLTIVFLLQLAAGILGFV) threads the bilayer. The Extracellular segment spans residues 118–235 (FSDKARGKVS…DKLVNWIHSN (118 aa)). Intrachain disulfides connect Cys156-Cys224, Cys157-Cys189, Cys173-Cys183, and Cys190-Cys203. N-linked (GlcNAc...) asparagine glycosylation occurs at Asn172. The chain crosses the membrane as a helical span at residues 236-256 (LFLLGGVALGLAIPQLVGILL). Over 257 to 283 (SQVLVNQIKDQIKLQLYNQQHRADPWY) the chain is Cytoplasmic.

This sequence belongs to the tetraspanin (TM4SF) family. Homodimer; disulfide-linked. Interacts (via extracellular domain) with ADAM10 (via extracellular domain). Interacts (via cytoplasmic domain) with PLEKHA7 (via WW domains); the interaction is dependent on PDZD11 being bound to PLEKHA7 and facilitates the docking of ADAM10 to zonula adherens. In terms of tissue distribution, predominantly expressed in erythroblasts.

The protein localises to the cell membrane. The protein resides in the cell junction. It is found in the adherens junction. It localises to the cytoplasm. Part of TspanC8 subgroup, composed of 6 members that interact with the transmembrane metalloprotease ADAM10. This interaction is required for ADAM10 exit from the endoplasmic reticulum and for enzymatic maturation and trafficking to the cell surface as well as substrate specificity. Different TspanC8/ADAM10 complexes have distinct substrates. Plays an important role in normal erythropoiesis. It has a role in the differentiation of erythroid progenitors. Negatively regulates ligand-induced Notch activity probably by regulating ADAM10 activity. Mediates docking of ADAM10 to zonula adherens by interacting with ADAM10 and, in a PDZD11-dependent manner, with the zonula adherens protein PLEKHA7. This is Tetraspanin-33 (Tspan33) from Mus musculus (Mouse).